Reading from the N-terminus, the 574-residue chain is Sulfate adenylyltransferase (574 aa).

An N-terminal region spans residues 1–170; the sequence is MANPPHGGVL…VEAIDRLEHY (170 aa). The tract at residues 171-395 is catalytic; sequence DYVGLRYTPA…LRESHPPRNQ (225 aa). Gln198 serves as a coordination point for sulfate. ATP contacts are provided by residues 198–201 and 292–295; these read QTRN and GRDH. Residues Thr199, Arg200, and Asn201 contribute to the active site. Residue Arg200 coordinates sulfate. Ala296 contacts sulfate. Residue Met334 coordinates ATP. The tract at residues 396 to 574 is allosteric regulation domain; adenylyl-sulfate kinase-like; the sequence is QGFTVFLTGY…LESQGLLTQL (179 aa). Residues 435 to 438, Arg452, 478 to 479, and Arg516 each bind 3'-phosphoadenylyl sulfate; these read ETVR and IA.

It in the N-terminal section; belongs to the sulfate adenylyltransferase family. In the C-terminal section; belongs to the APS kinase family. As to quaternary structure, homohexamer. Dimer of trimers.

The protein resides in the cytoplasm. The catalysed reaction is sulfate + ATP + H(+) = adenosine 5'-phosphosulfate + diphosphate. It functions in the pathway sulfur metabolism; hydrogen sulfide biosynthesis; sulfite from sulfate: step 1/3. Allosterically inhibited by 3'-phosphoadenosine 5'-phosphosulfate (PAPS). Catalyzes the first intracellular reaction of sulfate assimilation, forming adenosine-5'-phosphosulfate (APS) from inorganic sulfate and ATP. Plays an important role in sulfate activation as a component of the biosynthesis pathway of sulfur-containing amino acids. The sequence is that of Sulfate adenylyltransferase from Phaeosphaeria nodorum (strain SN15 / ATCC MYA-4574 / FGSC 10173) (Glume blotch fungus).